Consider the following 232-residue polypeptide: 7-cyano-7-deazaguanine synthase (232 aa).

Phe-8 to Leu-18 is a binding site for ATP. 4 residues coordinate Zn(2+): Cys-187, Cys-196, Cys-199, and Cys-202.

The protein belongs to the QueC family. Requires Zn(2+) as cofactor.

The catalysed reaction is 7-carboxy-7-deazaguanine + NH4(+) + ATP = 7-cyano-7-deazaguanine + ADP + phosphate + H2O + H(+). Its pathway is purine metabolism; 7-cyano-7-deazaguanine biosynthesis. Catalyzes the ATP-dependent conversion of 7-carboxy-7-deazaguanine (CDG) to 7-cyano-7-deazaguanine (preQ(0)). This is 7-cyano-7-deazaguanine synthase from Vibrio campbellii (strain ATCC BAA-1116).